Consider the following 339-residue polypeptide: uncharacterized protein (339 aa).

The Zn(2+) site is built by His17, His19, His197, and Asp278. Asp279 lines the substrate pocket.

It belongs to the metallo-dependent hydrolases superfamily. Adenosine and AMP deaminases family. Adenine deaminase type 2 subfamily. Zn(2+) is required as a cofactor.

Its subcellular location is the cytoplasm. The protein resides in the nucleus. This is an uncharacterized protein from Schizosaccharomyces pombe (strain 972 / ATCC 24843) (Fission yeast).